The sequence spans 102 residues: Iron-sulfur cluster assembly protein CyaY (102 aa).

It belongs to the frataxin family.

In terms of biological role, involved in iron-sulfur (Fe-S) cluster assembly. May act as a regulator of Fe-S biogenesis. This Histophilus somni (strain 129Pt) (Haemophilus somnus) protein is Iron-sulfur cluster assembly protein CyaY.